The chain runs to 164 residues: UPF0225 protein Shewmr4_2054 (164 aa).

It belongs to the UPF0225 family.

In Shewanella sp. (strain MR-4), this protein is UPF0225 protein Shewmr4_2054.